The following is a 375-amino-acid chain: Probable pectin lyase B (375 aa).

Residues 1-19 (MKYAAFLPTIGALVSQAIA) form the signal peptide. 2 cysteine pairs are disulfide-bonded: cysteine 82–cysteine 101 and cysteine 91–cysteine 225. A glycan (N-linked (GlcNAc...) asparagine) is linked at asparagine 128. The active site involves arginine 255. A disulfide bridge connects residues cysteine 321 and cysteine 329.

Belongs to the polysaccharide lyase 1 family.

It localises to the secreted. The catalysed reaction is Eliminative cleavage of (1-&gt;4)-alpha-D-galacturonan methyl ester to give oligosaccharides with 4-deoxy-6-O-methyl-alpha-D-galact-4-enuronosyl groups at their non-reducing ends.. In terms of biological role, pectinolytic enzymes consist of four classes of enzymes: pectin lyase, polygalacturonase, pectin methylesterase and rhamnogalacturonase. Among pectinolytic enzymes, pectin lyase is the most important in depolymerization of pectin, since it cleaves internal glycosidic bonds of highly methylated pectins. The chain is Probable pectin lyase B (pelB) from Aspergillus fumigatus (strain CBS 144.89 / FGSC A1163 / CEA10) (Neosartorya fumigata).